A 353-amino-acid polypeptide reads, in one-letter code: Photosystem II D2 protein (353 aa).

Thr-2 carries the post-translational modification N-acetylthreonine. Position 2 is a phosphothreonine (Thr-2). The helical transmembrane segment at Cys-41 to Thr-61 threads the bilayer. A chlorophyll a-binding site is contributed by His-118. A helical membrane pass occupies residues Gly-125 to Pro-141. Positions 130 and 143 each coordinate pheophytin a. A helical transmembrane segment spans residues Val-153–Ser-166. Residue His-198 coordinates chlorophyll a. A helical transmembrane segment spans residues Ala-208 to Asp-228. Positions 215 and 262 each coordinate a plastoquinone. His-215 contributes to the Fe cation binding site. Residue His-269 coordinates Fe cation. A helical transmembrane segment spans residues Gly-279 to Arg-295.

It belongs to the reaction center PufL/M/PsbA/D family. In terms of assembly, PSII is composed of 1 copy each of membrane proteins PsbA, PsbB, PsbC, PsbD, PsbE, PsbF, PsbH, PsbI, PsbJ, PsbK, PsbL, PsbM, PsbT, PsbX, PsbY, PsbZ, Psb30/Ycf12, at least 3 peripheral proteins of the oxygen-evolving complex and a large number of cofactors. It forms dimeric complexes. It depends on The D1/D2 heterodimer binds P680, chlorophylls that are the primary electron donor of PSII, and subsequent electron acceptors. It shares a non-heme iron and each subunit binds pheophytin, quinone, additional chlorophylls, carotenoids and lipids. There is also a Cl(-1) ion associated with D1 and D2, which is required for oxygen evolution. The PSII complex binds additional chlorophylls, carotenoids and specific lipids. as a cofactor.

It is found in the plastid. Its subcellular location is the chloroplast thylakoid membrane. It catalyses the reaction 2 a plastoquinone + 4 hnu + 2 H2O = 2 a plastoquinol + O2. Functionally, photosystem II (PSII) is a light-driven water:plastoquinone oxidoreductase that uses light energy to abstract electrons from H(2)O, generating O(2) and a proton gradient subsequently used for ATP formation. It consists of a core antenna complex that captures photons, and an electron transfer chain that converts photonic excitation into a charge separation. The D1/D2 (PsbA/PsbD) reaction center heterodimer binds P680, the primary electron donor of PSII as well as several subsequent electron acceptors. D2 is needed for assembly of a stable PSII complex. This is Photosystem II D2 protein from Lemna minor (Common duckweed).